Reading from the N-terminus, the 332-residue chain is 2,3-diketo-L-gulonate reductase (332 aa).

Catalysis depends on H44, which acts as the Proton donor. Residues 168–174, 224–225, and 304–306 contribute to the NAD(+) site; these read ITMVDMS, WK, and GHE.

Belongs to the LDH2/MDH2 oxidoreductase family. DlgD subfamily. As to quaternary structure, homodimer.

It localises to the cytoplasm. The catalysed reaction is 3-dehydro-L-gulonate + NAD(+) = 2,3-dioxo-L-gulonate + NADH + H(+). It catalyses the reaction 3-dehydro-L-gulonate + NADP(+) = 2,3-dioxo-L-gulonate + NADPH + H(+). Functionally, catalyzes the reduction of 2,3-diketo-L-gulonate in the presence of NADH, to form 3-keto-L-gulonate. The protein is 2,3-diketo-L-gulonate reductase of Escherichia coli O139:H28 (strain E24377A / ETEC).